A 262-amino-acid polypeptide reads, in one-letter code: Acyl-coenzyme A diphosphatase FITM2 (262 aa).

At 1-23 (MEHLERCAWVLRGTLVRAAVRRY) the chain is on the cytoplasmic side. Residues 24-44 (LPWALAASMLAGSLLKELSPL) traverse the membrane as a helical segment. Over 45–57 (PESYLSNKRNVLN) the chain is Lumenal. A helical transmembrane segment spans residues 58-78 (VYFVKVAWAWTFCLLLPFIAL). The Cytoplasmic portion of the chain corresponds to 79-93 (TNYHLTGKAGLVLRR). Residues 94–114 (LSTLLVGTAIWYVCTAIFSNV) traverse the membrane as a helical segment. The Lumenal segment spans residues 115-145 (EHYTGSCYQSPALEGVRNEPLSKQQCHGQGG). Residues 146-166 (FWHGFDISGHSFLLTFCALMI) traverse the membrane as a helical segment. The active site involves histidine 155. Over 167–185 (VEEMAVLHEVKTDRSHCLH) the chain is Cytoplasmic. A helical transmembrane segment spans residues 186 to 206 (VAITALVVALGFLTFIWVWMF). The Lumenal portion of the chain corresponds to 207-218 (LCTAVYFHNLSQ). Histidine 214 is an active-site residue. A helical transmembrane segment spans residues 219–239 (KVFGTLFGLLGWYGTYGFWYL). The Cytoplasmic portion of the chain corresponds to 240 to 262 (KSFSPGLPPQSCSSNLKQDSYKR).

This sequence belongs to the FIT family. FIT2 subfamily.

The protein resides in the endoplasmic reticulum membrane. It carries out the reaction an acyl-CoA + H2O = an acyl-4'-phosphopantetheine + adenosine 3',5'-bisphosphate + 2 H(+). It catalyses the reaction (9Z)-octadecenoyl-CoA + H2O = S-(9Z-octadecenoyl)-4'-phosphopantetheine + adenosine 3',5'-bisphosphate + 2 H(+). The catalysed reaction is (5Z,8Z,11Z,14Z)-eicosatetraenoyl-CoA + H2O = S-(5Z,8Z,11Z,14Z-eicosatetraenoyl)-4'-phosphopantetheine + adenosine 3',5'-bisphosphate + 2 H(+). The enzyme catalyses hexadecanoyl-CoA + H2O = S-hexadecanoyl-4'-phosphopantetheine + adenosine 3',5'-bisphosphate + 2 H(+). Its function is as follows. Fatty acyl-coenzyme A (CoA) diphosphatase that hydrolyzes fatty acyl-CoA to yield acyl-4'-phosphopantetheine and adenosine 3',5'-bisphosphate. Preferentially hydrolyzes unsaturated long-chain acyl-CoA substrates such as oleoyl-CoA/(9Z)-octadecenoyl-CoA and arachidonoyl-CoA/(5Z,8Z,11Z,14Z)-eicosatetraenoyl-CoA in the endoplasmic reticulum (ER) lumen. This catalytic activity is required for maintaining ER structure and for lipid droplets (LDs) biogenesis, which are lipid storage organelles involved in maintaining lipid and energy homeostasis. Directly binds to diacylglycerol (DAGs) and triacylglycerol, which is also important for LD biogenesis. May support directional budding of nacent LDs from the ER into the cytosol by reducing DAG levels at sites of LD formation. Plays a role in the regulation of cell morphology and cytoskeletal organization. The polypeptide is Acyl-coenzyme A diphosphatase FITM2 (Sus scrofa (Pig)).